Reading from the N-terminus, the 486-residue chain is UDP-N-acetylmuramate--L-alanine ligase (486 aa).

123–129 serves as a coordination point for ATP; sequence GTHGKTT.

It belongs to the MurCDEF family.

The protein localises to the cytoplasm. The enzyme catalyses UDP-N-acetyl-alpha-D-muramate + L-alanine + ATP = UDP-N-acetyl-alpha-D-muramoyl-L-alanine + ADP + phosphate + H(+). The protein operates within cell wall biogenesis; peptidoglycan biosynthesis. Functionally, cell wall formation. The sequence is that of UDP-N-acetylmuramate--L-alanine ligase from Pseudomonas savastanoi pv. phaseolicola (strain 1448A / Race 6) (Pseudomonas syringae pv. phaseolicola (strain 1448A / Race 6)).